Reading from the N-terminus, the 217-residue chain is Ribosomal RNA small subunit methyltransferase G (217 aa).

S-adenosyl-L-methionine-binding positions include Gly-79, Phe-84, 130–131 (AE), and Arg-148.

It belongs to the methyltransferase superfamily. RNA methyltransferase RsmG family.

Its subcellular location is the cytoplasm. The enzyme catalyses guanosine(527) in 16S rRNA + S-adenosyl-L-methionine = N(7)-methylguanosine(527) in 16S rRNA + S-adenosyl-L-homocysteine. Specifically methylates the N7 position of guanine in position 527 of 16S rRNA. This chain is Ribosomal RNA small subunit methyltransferase G, found in Myxococcus xanthus (strain DK1622).